We begin with the raw amino-acid sequence, 432 residues long: UDP-glucosyltransferase B1 (432 aa).

Belongs to the UDP-glycosyltransferase family.

It catalyses the reaction (9Z)-17-hydroxyoctadec-9-enoate 17-O-beta-D-glucoside + UDP-alpha-D-glucose = (9Z)-17-hydroxyoctadec-9-enoate 17-O-sophoroside + UDP + H(+). In terms of biological role, catalyzes the second glycosylation step of sophorolipid biosynthesis, the further glucosylation of the previoulsy formed glucolipid to give rise to an acidic sophorolipid. This is UDP-glucosyltransferase B1 from Starmerella bombicola (Yeast).